A 404-amino-acid chain; its full sequence is Cytochrome b (404 aa).

Helical transmembrane passes span 35 to 55 (FGSL…FLAM), 79 to 101 (WLLR…LHFF), 116 to 136 (VWCL…IGYV), and 182 to 202 (FFSL…LHLA). Positions 85 and 99 each coordinate heme b. Residues H186 and H200 each contribute to the heme b site. H205 is an a ubiquinone binding site. Transmembrane regions (helical) follow at residues 228 to 248 (IYVK…IFVF), 292 to 312 (LGGV…PFIN), 324 to 344 (IHQK…WIGC), and 351 to 370 (YVTI…AITP).

It belongs to the cytochrome b family. The main subunits of complex b-c1 are: cytochrome b, cytochrome c1 and the Rieske protein. It depends on heme b as a cofactor.

The protein localises to the mitochondrion inner membrane. Functionally, component of the ubiquinol-cytochrome c reductase complex (complex III or cytochrome b-c1 complex) that is part of the mitochondrial respiratory chain. The b-c1 complex mediates electron transfer from ubiquinol to cytochrome c. Contributes to the generation of a proton gradient across the mitochondrial membrane that is then used for ATP synthesis. In Marchantia polymorpha (Common liverwort), this protein is Cytochrome b (MT-CYB).